The primary structure comprises 83 residues: Exodeoxyribonuclease 7 small subunit (83 aa).

This sequence belongs to the XseB family. Heterooligomer composed of large and small subunits.

Its subcellular location is the cytoplasm. The enzyme catalyses Exonucleolytic cleavage in either 5'- to 3'- or 3'- to 5'-direction to yield nucleoside 5'-phosphates.. Bidirectionally degrades single-stranded DNA into large acid-insoluble oligonucleotides, which are then degraded further into small acid-soluble oligonucleotides. The protein is Exodeoxyribonuclease 7 small subunit of Bradyrhizobium sp. (strain BTAi1 / ATCC BAA-1182).